We begin with the raw amino-acid sequence, 134 residues long: Arginine decarboxylase proenzyme (134 aa).

The active-site Schiff-base intermediate with substrate; via pyruvic acid is Ser-82. Ser-82 is subject to Pyruvic acid (Ser); by autocatalysis. His-87 (proton acceptor; for processing activity) is an active-site residue. Cys-102 acts as the Proton donor; for catalytic activity in catalysis.

It belongs to the prokaryotic AdoMetDC family. Type 1 subfamily. In terms of assembly, heterooctamer of four alpha and four beta chains arranged as a tetramer of alpha/beta heterodimers. Pyruvate serves as cofactor. Post-translationally, is synthesized initially as an inactive proenzyme. Formation of the active enzyme involves a self-maturation process in which the active site pyruvoyl group is generated from an internal serine residue via an autocatalytic post-translational modification. Two non-identical subunits are generated from the proenzyme in this reaction, and the pyruvate is formed at the N-terminus of the alpha chain, which is derived from the carboxyl end of the proenzyme. The post-translation cleavage follows an unusual pathway, termed non-hydrolytic serinolysis, in which the side chain hydroxyl group of the serine supplies its oxygen atom to form the C-terminus of the beta chain, while the remainder of the serine residue undergoes an oxidative deamination to produce ammonia and the pyruvoyl group blocking the N-terminus of the alpha chain.

It catalyses the reaction L-arginine + H(+) = agmatine + CO2. It functions in the pathway amine and polyamine biosynthesis; agmatine biosynthesis; agmatine from L-arginine: step 1/1. Its activity is regulated as follows. Highly competitively inhibited by L-argininamide and L-arginine methyl ester. Also inhibited by alpha-difluoromethylarginine. Is not stimulated by potassium chloride as observed for other decarboxylases. In terms of biological role, specifically catalyzes the decarboxylation of L-arginine to agmatine. Is also able to decarboxylate L-canavanine, although less efficiently. Has no S-adenosylmethionine decarboxylase (AdoMetDC) activity. The sequence is that of Arginine decarboxylase proenzyme from Saccharolobus solfataricus (strain ATCC 35092 / DSM 1617 / JCM 11322 / P2) (Sulfolobus solfataricus).